The primary structure comprises 163 residues: Nucleotide-binding protein CKO_02735 (163 aa).

Belongs to the YajQ family.

Functionally, nucleotide-binding protein. In Citrobacter koseri (strain ATCC BAA-895 / CDC 4225-83 / SGSC4696), this protein is Nucleotide-binding protein CKO_02735.